The sequence spans 353 residues: Photosystem II D2 protein (353 aa).

Residue threonine 2 is modified to N-acetylthreonine. Position 2 is a phosphothreonine (threonine 2). Residues 41–61 (TAYFALGGWFTGTTFVTSWYT) form a helical membrane-spanning segment. Histidine 118 contributes to the chlorophyll a binding site. A helical membrane pass occupies residues 125-141 (GFMLRQFELARSVQLRP). The pheophytin a site is built by glutamine 130 and asparagine 143. Residues 153–166 (VFVSVFLIYPLGQS) form a helical membrane-spanning segment. Histidine 198 provides a ligand contact to chlorophyll a. The chain crosses the membrane as a helical span at residues 208 to 228 (AALLCAIHGATVENTLFEDGD). 2 residues coordinate a plastoquinone: histidine 215 and phenylalanine 262. Histidine 215 serves as a coordination point for Fe cation. Histidine 269 provides a ligand contact to Fe cation. The helical transmembrane segment at 279-295 (GLWMSAIGVVGLALNLR) threads the bilayer.

Belongs to the reaction center PufL/M/PsbA/D family. As to quaternary structure, PSII is composed of 1 copy each of membrane proteins PsbA, PsbB, PsbC, PsbD, PsbE, PsbF, PsbH, PsbI, PsbJ, PsbK, PsbL, PsbM, PsbT, PsbX, PsbY, PsbZ, Psb30/Ycf12, at least 3 peripheral proteins of the oxygen-evolving complex and a large number of cofactors. It forms dimeric complexes. The D1/D2 heterodimer binds P680, chlorophylls that are the primary electron donor of PSII, and subsequent electron acceptors. It shares a non-heme iron and each subunit binds pheophytin, quinone, additional chlorophylls, carotenoids and lipids. There is also a Cl(-1) ion associated with D1 and D2, which is required for oxygen evolution. The PSII complex binds additional chlorophylls, carotenoids and specific lipids. serves as cofactor.

Its subcellular location is the plastid. It is found in the chloroplast thylakoid membrane. It catalyses the reaction 2 a plastoquinone + 4 hnu + 2 H2O = 2 a plastoquinol + O2. Functionally, photosystem II (PSII) is a light-driven water:plastoquinone oxidoreductase that uses light energy to abstract electrons from H(2)O, generating O(2) and a proton gradient subsequently used for ATP formation. It consists of a core antenna complex that captures photons, and an electron transfer chain that converts photonic excitation into a charge separation. The D1/D2 (PsbA/PsbD) reaction center heterodimer binds P680, the primary electron donor of PSII as well as several subsequent electron acceptors. D2 is needed for assembly of a stable PSII complex. In Adiantum capillus-veneris (Maidenhair fern), this protein is Photosystem II D2 protein.